Reading from the N-terminus, the 619-residue chain is Probable pectinesterase/pectinesterase inhibitor 25 (619 aa).

The signal sequence occupies residues 1–23 (MKMQTLNFTSSLLFLSFIFLSCA). A disordered region spans residues 31–84 (SPSQPHSEPPSQLPFEPPVESPFFPPSQPPIFVPPSQPPSLPPSQSQSPSLACK). Residues 37–72 (SEPPSQLPFEPPVESPFFPPSQPPIFVPPSQPPSLP) show a composition bias toward pro residues. The segment at 73–231 (PSQSQSPSLA…TRLYSISLGL (159 aa)) is pectinesterase inhibitor 25. Residues asparagine 220, asparagine 255, asparagine 312, asparagine 325, and asparagine 364 are each glycosylated (N-linked (GlcNAc...) asparagine). Positions 302 to 601 (AVIVGPFKSD…FTVYNFTMGD (300 aa)) are pectinesterase 25. A substrate-binding site is contributed by threonine 380. The N-linked (GlcNAc...) asparagine glycan is linked to asparagine 382. Glutamine 410 contributes to the substrate binding site. The active-site Proton donor; for pectinesterase activity is the aspartate 433. Cysteine 447 and cysteine 467 form a disulfide bridge. The active-site Nucleophile; for pectinesterase activity is the aspartate 454. N-linked (GlcNAc...) asparagine glycosylation is present at asparagine 500. Residues arginine 522 and tryptophan 524 each coordinate substrate. N-linked (GlcNAc...) asparagine glycosylation is found at asparagine 550, asparagine 591, and asparagine 596.

In the N-terminal section; belongs to the PMEI family. This sequence in the C-terminal section; belongs to the pectinesterase family. Expressed in siliques.

Its subcellular location is the secreted. It is found in the cell wall. It catalyses the reaction [(1-&gt;4)-alpha-D-galacturonosyl methyl ester](n) + n H2O = [(1-&gt;4)-alpha-D-galacturonosyl](n) + n methanol + n H(+). Its pathway is glycan metabolism; pectin degradation; 2-dehydro-3-deoxy-D-gluconate from pectin: step 1/5. Functionally, acts in the modification of cell walls via demethylesterification of cell wall pectin. This Arabidopsis thaliana (Mouse-ear cress) protein is Probable pectinesterase/pectinesterase inhibitor 25 (PME25).